We begin with the raw amino-acid sequence, 261 residues long: uncharacterized protein (261 aa).

Residues 16–147 (KQTSLVLQNL…QTNVNVLRSQ (132 aa)) adopt a coiled-coil conformation.

It is found in the cytoplasm. This is an uncharacterized protein from Schizosaccharomyces pombe (strain 972 / ATCC 24843) (Fission yeast).